The sequence spans 610 residues: UvrABC system protein C (610 aa).

One can recognise a GIY-YIG domain in the interval 13–91; that stretch reads HLPGVYRMYD…IKENQPKYNV (79 aa). The region spanning 201 to 236 is the UVR domain; the sequence is GQVVEHLVQKMENAAQELDFEAAARFRDQIQSVRAV.

This sequence belongs to the UvrC family. As to quaternary structure, interacts with UvrB in an incision complex.

It is found in the cytoplasm. In terms of biological role, the UvrABC repair system catalyzes the recognition and processing of DNA lesions. UvrC both incises the 5' and 3' sides of the lesion. The N-terminal half is responsible for the 3' incision and the C-terminal half is responsible for the 5' incision. The chain is UvrABC system protein C from Actinobacillus pleuropneumoniae serotype 7 (strain AP76).